A 1349-amino-acid chain; its full sequence is Periaxin (1349 aa).

Position 7 is a phosphoserine (Ser7). In terms of domain architecture, PDZ spans 16-99; that stretch reads LVEIIVETEA…YKVSFCLKRT (84 aa). The Nuclear export signal signature appears at 70-84; it reads VFFENFKYEDALRLL. Residue Ser133 is modified to Phosphoserine. Repeat copies occupy residues 402–406, 410–414, 418–422, 426–430, 431–435, 436–440, 444–448, 452–456, 457–461, 462–466, 467–471, 472–476, 477–481, 485–489, 493–497, 501–505, 506–510, 514–518, 519–523, 524–528, 532–536, 537–549, 553–557, 558–562, 563–567, 571–575, 576–580, 589–593, 594–598, 599–603, 612–616, 617–621, 622–626, 630–634, 635–639, 643–647, 648–652, 653–657, 661–665, 669–673, and 674–678. Residues 402 to 678 are 41 X 5 AA approximate tandem repeats of [LVMGIE]-[PSM]-[EDKA]-[LIVMA]-[AQKHPRT]; that may have a tripeptide spacer of [ALKD]-[IPV]-[KPH]; that stretch reads PPEVKVPKGP…APEVKLPKAP (277 aa). 2 positions are modified to phosphoserine: Ser794 and Ser974. Residues 1207–1218 show a composition bias toward basic and acidic residues; sequence AKEGAEEGEKAK. Residues 1207–1349 are disordered; the sequence is AKEGAEEGEK…RMEGAQAAVI (143 aa). Residues 1232-1242 are compositionally biased toward low complexity; the sequence is SEAVSGEGSPS. Phosphoserine occurs at positions 1236, 1240, 1242, 1289, 1295, and 1327.

This sequence belongs to the periaxin family. As to quaternary structure, homodimer (via PDZ domain). Interacts with SCN10A. Found in a complex with SCN10A. Interacts with DRP2. Identified in a dystroglycan complex that contains at least PRX, DRP2, UTRN, DMD and DAG1. Detected in a complex composed of at least EZR, AHNAK, PPL and PRX. Identified in a complex with EZR, AHNAK, BFSP1, BFSP2, ANK2, PLEC, VIM and spectrin. In terms of tissue distribution, detected in eye lens (at protein level).

Its subcellular location is the nucleus. It localises to the cytoplasm. The protein localises to the cell membrane. The protein resides in the cell junction. It is found in the adherens junction. In terms of biological role, scaffolding protein that functions as part of a dystroglycan complex in Schwann cells, and as part of EZR and AHNAK-containing complexes in eye lens fiber cells. Required for the maintenance of the peripheral myelin sheath that is essential for normal transmission of nerve impulses and normal perception of sensory stimuli. Required for normal transport of MBP mRNA from the perinuclear to the paranodal regions. Required for normal remyelination after nerve injury. Required for normal elongation of Schwann cells and normal length of the internodes between the nodes of Ranvier. The demyelinated nodes of Ranvier permit saltatory transmission of nerve impulses; shorter internodes cause slower transmission of nerve impulses. Required for the formation of appositions between the abaxonal surface of the myelin sheath and the Schwann cell plasma membrane; the Schwann cell cytoplasm is restricted to regions between these appositions. Required for the formation of Cajal bands and of Schmidt-Lanterman incisures that correspond to short, cytoplasm-filled regions on myelinated nerves. Recruits DRP2 to the Schwann cell plasma membrane. Required for normal protein composition of the eye lens fiber cell plasma membrane and normal eye lens fiber cell morphology. The protein is Periaxin (PRX) of Bos taurus (Bovine).